The following is a 223-amino-acid chain: Ras-related protein Rab-37 (223 aa).

Residues 1 to 13 (MTGTPGAATAGDG) show a composition bias toward low complexity. A disordered region spans residues 1–22 (MTGTPGAATAGDGEAPERSPPF). T2 is modified (N-acetylthreonine). Residues S38, G39, V40, G41, K42, T43, C44, and T62 each coordinate GTP. Position 43 (T43) interacts with Mg(2+). Short sequence motifs (switch) lie at residues 52 to 67 (GAFLSGTFIATVGIDS) and 85 to 102 (DTAGQERFRSVTHAYYRD). Positions 62 and 85 each coordinate Mg(2+). The GTP site is built by G88, N143, K144, D146, S173, A174, and K175. 2 S-geranylgeranyl cysteine lipidation sites follow: C219 and C220. A Cysteine methyl ester modification is found at C220. Positions 221–223 (SFV) are cleaved as a propeptide — removed in mature form.

It belongs to the small GTPase superfamily. Rab family. In terms of assembly, interacts with RIMS1. Interacts (in GDP-bound form) with RPGR, RPGR functions as guanine exchange factor (GEF). Requires Mg(2+) as cofactor. In terms of tissue distribution, expressed in the retina (at protein level). Specifically expressed in the bone marrow mast cells.

It is found in the cytoplasmic vesicle. The protein localises to the cell projection. The protein resides in the cilium. It catalyses the reaction GTP + H2O = GDP + phosphate + H(+). Regulated by guanine nucleotide exchange factors (GEFs) including RPGR which promote the exchange of bound GDP for free GTP. Regulated by GTPase activating proteins (GAPs) which increase the GTP hydrolysis activity. Inhibited by GDP dissociation inhibitors (GDIs). Functionally, the small GTPases Rab are key regulators of intracellular membrane trafficking, from the formation of transport vesicles to their fusion with membranes. Rabs cycle between an inactive GDP-bound form and an active GTP-bound form that is able to recruit to membranes different sets of downstream effectors directly responsible for vesicle formation, movement, tethering and fusion. Acts as an organizer for autophagosome biogenesis in a GTP-dependent manner. Involved in retinal homeostasis by autophagy regulation. In Mus musculus (Mouse), this protein is Ras-related protein Rab-37.